The chain runs to 249 residues: Domoic acid biosynthesis cluster protein B (249 aa).

Unknown function: part of the gene cluster that mediates the biosynthesis of domoic acid (DA) and derivatives, natural products with neurochemical activity acting as ionotropic glutamate receptor (iGluR) agonists, thus being neurotoxins causing amnesic shellfish poisoning (ASP). The polypeptide is Domoic acid biosynthesis cluster protein B (Pseudo-nitzschia multiseries (Marine planktonic diatom)).